Consider the following 832-residue polypeptide: Protein PPP4R3C (832 aa).

The interval 708-832 (RTQEGEAVMP…SPKKKPHLSS (125 aa)) is disordered. Composition is skewed to basic and acidic residues over residues 725–735 (FTETKRTHQEG) and 749–765 (METK…DSPK). A compositionally biased stretch (low complexity) spans 769–779 (SGDFKFSSSYS). The segment covering 801–820 (PDDEEEKEEDEEEKEEDKED) has biased composition (acidic residues).

The protein belongs to the SMEK family.

In Homo sapiens (Human), this protein is Protein PPP4R3C.